Consider the following 198-residue polypeptide: Phosphoheptose isomerase (198 aa).

The region spanning 36–195 is the SIS domain; sequence AIEVYQNGNK…EEAIFRNKFV (160 aa). 51–53 serves as a coordination point for substrate; that stretch reads NGG. Zn(2+)-binding residues include H60 and E64. Substrate contacts are provided by residues E64, 93 to 94, 119 to 121, S124, and Q171; these read ND and STS. Zn(2+)-binding residues include Q171 and H179.

This sequence belongs to the SIS family. GmhA subfamily. Zn(2+) serves as cofactor.

It localises to the cytoplasm. The enzyme catalyses 2 D-sedoheptulose 7-phosphate = D-glycero-alpha-D-manno-heptose 7-phosphate + D-glycero-beta-D-manno-heptose 7-phosphate. It functions in the pathway carbohydrate biosynthesis; D-glycero-D-manno-heptose 7-phosphate biosynthesis; D-glycero-alpha-D-manno-heptose 7-phosphate and D-glycero-beta-D-manno-heptose 7-phosphate from sedoheptulose 7-phosphate: step 1/1. The protein operates within cell surface structure biogenesis; S-layer biogenesis. Its function is as follows. Catalyzes the isomerization of sedoheptulose 7-phosphate in D-glycero-D-manno-heptose 7-phosphate. This is Phosphoheptose isomerase from Aneurinibacillus thermoaerophilus.